A 548-amino-acid polypeptide reads, in one-letter code: MDRFGDISEGEVDHSFFDSDFEDTKKCESNSIFDKQNDDDFKEGINKDIKNLNLKFGVQNDNLKEKIDNDTENVNVKLGIQTKENYLTQKGNERKPKFPSKEQHVENDPIQTRSPSLLTSSRSKKLCDTTKGNKLHLPVPNRIPKIVKGEDDYYTDGEESSDDGKKYHVRSKSAKPSSNLKKNNTSKKYSKASSSSLSSSSSRSSSDCSDIGSDMQNKPDSGSSGKRVSSVTPSSPKQKCKSGRKSSAKQKAGDYNAESEDNVTDVTPASTPDSSPAQPFELSQSQNQKVKVKRQENVSRDVYEDVEALKNDSRCLKSAKRKEKHGQNFAPKSSVLDANLDRRSKQKVLHDTMDLNHLLKAFLQLDKKGPQKHHFEQPSIIPRKNYSFTREEVRQIDRENQRLLKELSRQAEKPGNKSTIPGRSLGHPPKLYHSALNRQREQQRIERENMALLKRLEAVKPTVGMKRSEQLMDYHRNISYLNPSPSVRRVRSTLGHYSPLRGASRTSSATSGLSCKTDRSVLDTSSGFLLRPKPPNIQCSNSKVLRSH.

S8 and S19 each carry phosphoserine. Disordered stretches follow at residues 85–297 (NYLT…RQEN), 407–431 (LSRQ…PPKL), and 497–548 (YSPL…LRSH). Positions 91 to 107 (GNERKPKFPSKEQHVEN) are enriched in basic and acidic residues. Over residues 112–121 (TRSPSLLTSS) the composition is skewed to low complexity. Positions 152 to 161 (DYYTDGEESS) are enriched in acidic residues. A Phosphothreonine modification is found at T155. S160 and S161 each carry phosphoserine. Over residues 191–209 (KASSSSLSSSSSRSSSDCS) the composition is skewed to low complexity. The span at 214–237 (DMQNKPDSGSSGKRVSSVTPSSPK) shows a compositional bias: polar residues. S235 carries the phosphoserine modification. Basic residues predominate over residues 238–248 (QKCKSGRKSSA). A Phosphoserine modification is found at S259. A compositionally biased stretch (polar residues) spans 264–289 (TDVTPASTPDSSPAQPFELSQSQNQK). The stretch at 383-460 (RKNYSFTREE…ALLKRLEAVK (78 aa)) forms a coiled coil. Polar residues-rich tracts occupy residues 504 to 514 (SRTSSATSGLS) and 537 to 548 (IQCSNSKVLRSH).

This sequence belongs to the CFAP97 family.

This chain is Cilia- and flagella-associated protein 97, found in Rattus norvegicus (Rat).